The primary structure comprises 192 residues: Putative B3 domain-containing protein At4g03160 (192 aa).

A disordered region spans residues Val22 to Glu44. Positions Asp25–Glu44 are enriched in acidic residues. The segment at residues Lys75–Arg173 is a DNA-binding region (TF-B3).

It is found in the nucleus. The polypeptide is Putative B3 domain-containing protein At4g03160 (Arabidopsis thaliana (Mouse-ear cress)).